Here is a 305-residue protein sequence, read N- to C-terminus: UPF0450 protein C17orf58 homolog (305 aa).

The first 22 residues, methionine 1–alanine 22, serve as a signal peptide directing secretion. The disordered stretch occupies residues glutamate 18 to alanine 160. Basic and acidic residues predominate over residues valine 21–proline 39. 3 cysteine pairs are disulfide-bonded: cysteine 159–cysteine 233, cysteine 163–cysteine 237, and cysteine 174–cysteine 304. Residues cysteine 159–cysteine 304 form the NTR domain.

This sequence belongs to the UPF0450 family.

This is UPF0450 protein C17orf58 homolog from Mus musculus (Mouse).